We begin with the raw amino-acid sequence, 322 residues long: Tlg2p-like protein a (322 aa).

The Cytoplasmic portion of the chain corresponds to 1 to 301; sequence MATRNRTLLF…QRHGGMVKCA (301 aa). A coiled-coil region spans residues 116-146; sequence KEDQHNIESLTQEITFLLKKSEKQLQRLSAS. In terms of domain architecture, t-SNARE coiled-coil homology spans 226–288; the sequence is EEVSVEREKE…EDGLKQLQKA (63 aa). The chain crosses the membrane as a helical; Anchor for type IV membrane protein span at residues 302–322; that stretch reads SVLVILCFIMLLLLILKEIFL.

Belongs to the syntaxin family. Interacts with VTI12 and SYP61 to form a t-SNARE complex and with VPS45. Interacts with TNO1. Binds to YKT61 and YKT62. Core constituent of the SNARE complex required for membrane fusion at the trans-Golgi network. As to expression, mostly expressed in flowers, to a lower extent in leaves and roots, and, at low levels, in stems.

The protein resides in the golgi apparatus. It localises to the trans-Golgi network membrane. Contributes to the regulation of secretory and vacuolar transport pathways in the post-Golgi network, and to the maintenance of the Golgi apparatus and trans-Golgi network (TGN) morphologies. Together with VTI12, required for membrane fusion. Vesicle trafficking protein that functions in the secretory pathway and mediates liposome fusion; the fusion of phospholipid vesicles containing SYP41 and VTI12 is triggered by YKT61 and YKT62. Required for extracellular resistance responses to a fungal pathogen. Also involved in the protection of chloroplasts from salicylic acid-dependent biotic stress. This is Tlg2p-like protein a from Arabidopsis thaliana (Mouse-ear cress).